A 201-amino-acid chain; its full sequence is Superoxide dismutase [Mn] (201 aa).

Residues histidine 27, histidine 81, aspartate 163, and histidine 167 each coordinate Mn(2+).

The protein belongs to the iron/manganese superoxide dismutase family. Homodimer. Requires Mn(2+) as cofactor.

Its subcellular location is the secreted. It carries out the reaction 2 superoxide + 2 H(+) = H2O2 + O2. Functionally, destroys superoxide anion radicals which are normally produced within the cells and which are toxic to biological systems. The protein is Superoxide dismutase [Mn] (sodA) of Streptococcus pyogenes serotype M3 (strain ATCC BAA-595 / MGAS315).